Reading from the N-terminus, the 530-residue chain is Carbohydrate sulfotransferase 2 (530 aa).

A disordered region spans residues 1–20 (MSRSSPRALPPGALPRPLPA). Over 1–54 (MSRSSPRALPPGALPRPLPAAPAAVQRALLPPWPRRAGRRWPASPLGMKVFRRK) the chain is Cytoplasmic. Over residues 8–20 (ALPPGALPRPLPA) the composition is skewed to pro residues. The helical; Signal-anchor for type II membrane protein transmembrane segment at 55 to 75 (ALVLCAGYALLLVLTMLNLLD) threads the bilayer. Topologically, residues 76–530 (YKWHKEPLQQ…SKTLLRKPRL (455 aa)) are lumenal. The disordered stretch occupies residues 97–128 (GAAGAGWGRPGSPPAAPPRAHSRMDPRTPYRP). Residue 173–179 (WRSGSSF) coordinates 3'-phosphoadenylyl sulfate. Asparagine 243 carries N-linked (GlcNAc...) asparagine glycosylation. A 3'-phosphoadenylyl sulfate-binding site is contributed by 332–340 (RDPRAVASS). Residues asparagine 457 and asparagine 475 are each glycosylated (N-linked (GlcNAc...) asparagine).

The protein belongs to the sulfotransferase 1 family. Gal/GlcNAc/GalNAc subfamily. As to quaternary structure, homodimer; disulfide-linked. Homodimerization is not essential for enzyme activity. In terms of tissue distribution, in brain, it is expressed in pyramidal cells in the CA3 subregion of the hippocampus, cerebellar nucleus and Purkinje cells. Expressed in peripheral lymph nodes.

Its subcellular location is the golgi apparatus. The protein resides in the trans-Golgi network membrane. It carries out the reaction 3-O-{N-acetyl-beta-D-glucosaminyl-(1-&gt;3)-beta-D-galactosyl-(1-&gt;3)-N-acetyl-alpha-D-galactosaminyl}-L-threonyl-[protein] + 3'-phosphoadenylyl sulfate = 3-O-{6-O-sulfo-N-acetyl-beta-D-glucosaminyl-(1-&gt;3)-beta-D-galactosyl-(1-&gt;3)-N-acetyl-alpha-D-galactosaminyl}-L-threonyl-[protein] + adenosine 3',5'-bisphosphate + H(+). The catalysed reaction is 3-O-{N-acetyl-beta-D-glucosaminyl-(1-&gt;3)-beta-D-galactosyl-(1-&gt;3)-N-acetyl-alpha-D-galactosaminyl}-L-seryl-[protein] + 3'-phosphoadenylyl sulfate = 3-O-{6-O-sulfo-N-acetyl-beta-D-glucosaminyl-(1-&gt;3)-beta-D-galactosyl-(1-&gt;3)-N-acetyl-alpha-D-galactosaminyl}-L-seryl-[protein] + adenosine 3',5'-bisphosphate + H(+). The enzyme catalyses a 3-O-{beta-D-galactosyl-(1-&gt;3)-[N-acetyl-beta-D-glucosaminyl-(1-&gt;6)]-N-acetyl-alpha-D-galactosaminyl}-L-threonyl-[protein] + 3'-phosphoadenylyl sulfate = 3-O-{beta-D-galactosyl-(1-&gt;3)-[6-O-sulfo-N-acetyl-beta-D-glucosaminyl-(1-&gt;6)]-N-acetyl-alpha-D-galactosaminyl}-L-threonyl-[protein] + adenosine 3',5'-bisphosphate + H(+). It catalyses the reaction 3-O-{beta-D-galactosyl-(1-&gt;3)-[N-acetyl-beta-D-glucosaminyl-(1-&gt;6)]-N-acetyl-alpha-D-galactosaminyl}-L-seryl-[protein] + 3'-phosphoadenylyl sulfate = 3-O-{beta-D-galactosyl-(1-&gt;3)-[6-O-sulfo-N-acetyl-beta-D-glucosaminyl-(1-&gt;6)]-N-acetyl-alpha-D-galactosaminyl}-L-seryl-[protein] + adenosine 3',5'-bisphosphate + H(+). It functions in the pathway protein modification; carbohydrate sulfation. Its function is as follows. Sulfotransferase that utilizes 3'-phospho-5'-adenylyl sulfate (PAPS) as sulfonate donor to catalyze the transfer of sulfate to position 6 of non-reducing N-acetylglucosamine (GlcNAc) residues within keratan-like structures on N-linked glycans and within mucin-associated glycans that can ultimately serve as SELL ligands. SELL ligands are present in high endothelial cells (HEVs) and play a central role in lymphocyte homing at sites of inflammation. Participates in biosynthesis of the SELL ligand sialyl 6-sulfo Lewis X and in lymphocyte homing to Peyer patches. Has no activity toward O-linked sugars. Its substrate specificity may be influenced by its subcellular location. Sulfates GlcNAc residues at terminal, non-reducing ends of oligosaccharide chains. The sequence is that of Carbohydrate sulfotransferase 2 (Chst2) from Mus musculus (Mouse).